We begin with the raw amino-acid sequence, 1404 residues long: G8 domain-containing protein DDB_G0286897 (1404 aa).

An N-terminal signal peptide occupies residues Met1–Cys20. Transmembrane regions (helical) follow at residues Leu97–Ala117 and Ile128–Ile148. Residues Asn352, Asn365, Asn413, Asn481, Asn639, Asn838, Asn979, Asn1003, Asn1017, Asn1253, and Asn1334 are each glycosylated (N-linked (GlcNAc...) asparagine). The G8 domain maps to Ser553–Thr679.

The protein belongs to the comF family.

It is found in the membrane. This Dictyostelium discoideum (Social amoeba) protein is G8 domain-containing protein DDB_G0286897.